A 366-amino-acid chain; its full sequence is 3-dehydroquinate synthase (366 aa).

Residues 69–74 (DGEAYK), 103–107 (GVIGD), 127–128 (TT), K140, and K149 each bind NAD(+). Zn(2+)-binding residues include E182, H245, and H262.

It belongs to the sugar phosphate cyclases superfamily. Dehydroquinate synthase family. It depends on Co(2+) as a cofactor. Requires Zn(2+) as cofactor. NAD(+) is required as a cofactor.

The protein resides in the cytoplasm. The catalysed reaction is 7-phospho-2-dehydro-3-deoxy-D-arabino-heptonate = 3-dehydroquinate + phosphate. It participates in metabolic intermediate biosynthesis; chorismate biosynthesis; chorismate from D-erythrose 4-phosphate and phosphoenolpyruvate: step 2/7. Its function is as follows. Catalyzes the conversion of 3-deoxy-D-arabino-heptulosonate 7-phosphate (DAHP) to dehydroquinate (DHQ). The chain is 3-dehydroquinate synthase from Pseudomonas fluorescens (strain ATCC BAA-477 / NRRL B-23932 / Pf-5).